Consider the following 377-residue polypeptide: Membrane protein MLC1 (377 aa).

Residues 1-23 (MTQEPFREELAYDRMPTLERGRQ) show a composition bias toward basic and acidic residues. The segment at 1–36 (MTQEPFREELAYDRMPTLERGRQDPASYAPDAKPSD) is disordered. 4 helical membrane-spanning segments follow: residues 52–72 (WVFS…SLYL), 82–100 (YLRC…SFTV), 111–131 (FQIL…WFGC), and 144–164 (FNLI…IIAA). A phosphoserine mark is found at serine 177 and serine 179. A run of 4 helical transmembrane segments spans residues 199–219 (SVVE…ALNV), 230–250 (VTFF…HVAA), 257–277 (LVEV…TASG), and 304–324 (LLLL…GTAI).

As to quaternary structure, interacts with ATP1B1. Part of a complex containing ATP1B1, TRPV4, AQP4 and HEPACAM. In terms of tissue distribution, expressed in the brain, with highest levels found in the amygdala, nucleus caudatus, thalamus and hippocampus.

Its subcellular location is the membrane. The protein localises to the cell membrane. It is found in the cytoplasm. It localises to the perinuclear region. The protein resides in the endoplasmic reticulum. Its function is as follows. Transmembrane protein mainly expressed in brain astrocytes that may play a role in transport across the blood-brain and brain-cerebrospinal fluid barriers. Regulates the response of astrocytes to hypo-osmosis by promoting calcium influx. May function as regulatory protein of membrane protein complexes such as ion channels. This Homo sapiens (Human) protein is Membrane protein MLC1.